The chain runs to 139 residues: Acidic phospholipase A2 Tgc-E6 (139 aa).

The signal sequence occupies residues 1–16 (MRTLWIMAVLLLGVEG). Intrachain disulfides connect Cys42–Cys132, Cys44–Cys60, Cys59–Cys111, Cys65–Cys139, Cys66–Cys104, Cys73–Cys97, and Cys91–Cys102. Residues Tyr43, Gly45, and Gly47 each contribute to the Ca(2+) site. Residue His63 is part of the active site. Asp64 is a binding site for Ca(2+). Residue Asp105 is part of the active site.

The protein belongs to the phospholipase A2 family. Group II subfamily. D49 sub-subfamily. As to quaternary structure, monomer. Ca(2+) is required as a cofactor. Expressed by the venom gland.

It is found in the secreted. It carries out the reaction a 1,2-diacyl-sn-glycero-3-phosphocholine + H2O = a 1-acyl-sn-glycero-3-phosphocholine + a fatty acid + H(+). Functionally, snake venom phospholipase A2 (PLA2) that inhibits the ADP-(IC(50)=272 nM) and collagen-induced (IC(50)=518 nM) human platelet aggregation in platelet rich plasma. Exhibits very high hydrolytic activities toward the synthetic lecithin, and prefers the anionic micelles (dPPC with deoxycholate) to the zwitterionic micelles (dPPC with Triton X-100). PLA2 catalyzes the calcium-dependent hydrolysis of the 2-acyl groups in 3-sn-phosphoglycerides. The protein is Acidic phospholipase A2 Tgc-E6 of Trimeresurus gracilis (Kikuchi habu).